The chain runs to 469 residues: Glutamate--tRNA ligase (469 aa).

Residues 12–22 (PSPTGFIHLGN) carry the 'HIGH' region motif. A 'KMSKS' region motif is present at residues 244–248 (KMSKR). Lys-247 is an ATP binding site.

This sequence belongs to the class-I aminoacyl-tRNA synthetase family. Glutamate--tRNA ligase type 1 subfamily. As to quaternary structure, monomer.

It is found in the cytoplasm. It catalyses the reaction tRNA(Glu) + L-glutamate + ATP = L-glutamyl-tRNA(Glu) + AMP + diphosphate. In terms of biological role, catalyzes the attachment of glutamate to tRNA(Glu) in a two-step reaction: glutamate is first activated by ATP to form Glu-AMP and then transferred to the acceptor end of tRNA(Glu). This is Glutamate--tRNA ligase from Acidovorax sp. (strain JS42).